Reading from the N-terminus, the 90-residue chain is Large ribosomal subunit protein eL33 (90 aa).

The protein belongs to the eukaryotic ribosomal protein eL33 family.

The polypeptide is Large ribosomal subunit protein eL33 (Methanopyrus kandleri (strain AV19 / DSM 6324 / JCM 9639 / NBRC 100938)).